Reading from the N-terminus, the 319-residue chain is MKIAVLGAAGGIGQALALLLKLDLPANSILSLYDLAPVTPGVAKDLSHIPTSVKVEGFAGTDPTAAIEGADVILISAGVARKPGMDRSDLFNINAGIIKNLVAKVAEVAPEACIGIITNPVNTTVAIAAEVLKAAGVYNKNKLFGITTLDVIRAEEFVAELKGLPSEDVRVNVIGGHSGTTILPVLSQIQGVSFTDQEVIDLTSRIQNAGTEVVEAKAGGGSATLSMACAASRFAIQLVHALSGKQGIIQNAYVDGGNPASPFFTQPLLLGKNGIDKVLPYGELSSFEETKKEEMLSVLHADIEMGIDFVSKTLAAEVS.

NAD(+) is bound by residues 7–13 and aspartate 34; that span reads GAAGGIG. The substrate site is built by arginine 81 and arginine 87. Residues asparagine 94 and 117–119 contribute to the NAD(+) site; that span reads ITN. Positions 119 and 153 each coordinate substrate. Histidine 177 (proton acceptor) is an active-site residue. Methionine 227 provides a ligand contact to NAD(+).

The protein belongs to the LDH/MDH superfamily. MDH type 1 family. In terms of assembly, homodimer.

It carries out the reaction (S)-malate + NAD(+) = oxaloacetate + NADH + H(+). In terms of biological role, catalyzes the reversible oxidation of malate to oxaloacetate. This Psychromonas ingrahamii (strain DSM 17664 / CCUG 51855 / 37) protein is Malate dehydrogenase.